The chain runs to 279 residues: Urease accessory protein UreD (279 aa).

This sequence belongs to the UreD family. UreD, UreF and UreG form a complex that acts as a GTP-hydrolysis-dependent molecular chaperone, activating the urease apoprotein by helping to assemble the nickel containing metallocenter of UreC. The UreE protein probably delivers the nickel.

The protein localises to the cytoplasm. Functionally, required for maturation of urease via the functional incorporation of the urease nickel metallocenter. This Nostoc punctiforme (strain ATCC 29133 / PCC 73102) protein is Urease accessory protein UreD.